A 343-amino-acid chain; its full sequence is S-adenosylmethionine:tRNA ribosyltransferase-isomerase (343 aa).

It belongs to the QueA family. Monomer.

It localises to the cytoplasm. It catalyses the reaction 7-aminomethyl-7-carbaguanosine(34) in tRNA + S-adenosyl-L-methionine = epoxyqueuosine(34) in tRNA + adenine + L-methionine + 2 H(+). It participates in tRNA modification; tRNA-queuosine biosynthesis. Transfers and isomerizes the ribose moiety from AdoMet to the 7-aminomethyl group of 7-deazaguanine (preQ1-tRNA) to give epoxyqueuosine (oQ-tRNA). In Syntrophotalea carbinolica (strain DSM 2380 / NBRC 103641 / GraBd1) (Pelobacter carbinolicus), this protein is S-adenosylmethionine:tRNA ribosyltransferase-isomerase.